A 61-amino-acid polypeptide reads, in one-letter code: Small ribosomal subunit protein uS14 (61 aa).

Residues Cys-24, Cys-27, Cys-40, and Cys-43 each coordinate Zn(2+).

It belongs to the universal ribosomal protein uS14 family. Zinc-binding uS14 subfamily. As to quaternary structure, part of the 30S ribosomal subunit. Contacts proteins S3 and S10. It depends on Zn(2+) as a cofactor.

Its function is as follows. Binds 16S rRNA, required for the assembly of 30S particles and may also be responsible for determining the conformation of the 16S rRNA at the A site. The polypeptide is Small ribosomal subunit protein uS14 (Clostridium botulinum (strain ATCC 19397 / Type A)).